The sequence spans 874 residues: S-layer protein (874 aa).

The first 30 residues, 1–30 (MAKTNSYKKVIAGTMTAAMVAGVVSPVAAA), serve as a signal peptide directing secretion. SLH domains are found at residues 31–93 (GKSF…NAQP), 94–151 (SFKD…KVDG), and 152–214 (TLVT…ENSD).

Its subcellular location is the secreted. The protein resides in the cell wall. It localises to the S-layer. In terms of biological role, the S-layer is a paracrystalline mono-layered assembly of proteins which coat the surface of bacteria. In Bacillus licheniformis, this protein is S-layer protein.